A 272-amino-acid chain; its full sequence is Dermonecrotic toxin SpeSicTox-betaIB2b (272 aa).

Residue histidine 5 is part of the active site. Residues glutamate 25 and aspartate 27 each coordinate Mg(2+). The Nucleophile role is filled by histidine 41. 2 disulfide bridges follow: cysteine 45–cysteine 51 and cysteine 47–cysteine 191. Position 85 (aspartate 85) interacts with Mg(2+).

It belongs to the arthropod phospholipase D family. Class II subfamily. It depends on Mg(2+) as a cofactor. In terms of tissue distribution, expressed by the venom gland.

The protein localises to the secreted. The enzyme catalyses an N-(acyl)-sphingosylphosphocholine = an N-(acyl)-sphingosyl-1,3-cyclic phosphate + choline. It carries out the reaction an N-(acyl)-sphingosylphosphoethanolamine = an N-(acyl)-sphingosyl-1,3-cyclic phosphate + ethanolamine. It catalyses the reaction a 1-acyl-sn-glycero-3-phosphocholine = a 1-acyl-sn-glycero-2,3-cyclic phosphate + choline. The catalysed reaction is a 1-acyl-sn-glycero-3-phosphoethanolamine = a 1-acyl-sn-glycero-2,3-cyclic phosphate + ethanolamine. Dermonecrotic toxins cleave the phosphodiester linkage between the phosphate and headgroup of certain phospholipids (sphingolipid and lysolipid substrates), forming an alcohol (often choline) and a cyclic phosphate. This toxin acts on sphingomyelin (SM). It may also act on ceramide phosphoethanolamine (CPE), lysophosphatidylcholine (LPC) and lysophosphatidylethanolamine (LPE), but not on lysophosphatidylserine (LPS), and lysophosphatidylglycerol (LPG). It acts by transphosphatidylation, releasing exclusively cyclic phosphate products as second products. Induces dermonecrosis, hemolysis, increased vascular permeability, edema, inflammatory response, and platelet aggregation. This chain is Dermonecrotic toxin SpeSicTox-betaIB2b, found in Sicarius peruensis (Six-eyed sand spider).